A 257-amino-acid chain; its full sequence is Aspartate/glutamate leucyltransferase (257 aa).

It belongs to the R-transferase family. Bpt subfamily.

Its subcellular location is the cytoplasm. It catalyses the reaction N-terminal L-glutamyl-[protein] + L-leucyl-tRNA(Leu) = N-terminal L-leucyl-L-glutamyl-[protein] + tRNA(Leu) + H(+). It carries out the reaction N-terminal L-aspartyl-[protein] + L-leucyl-tRNA(Leu) = N-terminal L-leucyl-L-aspartyl-[protein] + tRNA(Leu) + H(+). In terms of biological role, functions in the N-end rule pathway of protein degradation where it conjugates Leu from its aminoacyl-tRNA to the N-termini of proteins containing an N-terminal aspartate or glutamate. The polypeptide is Aspartate/glutamate leucyltransferase (Nitrobacter hamburgensis (strain DSM 10229 / NCIMB 13809 / X14)).